The sequence spans 499 residues: BTB/POZ domain-containing protein 16 (499 aa).

Residues 143 to 199 (INDPLVTREAFATALKNLYMQEVKICLDDVLGVLAAAHILQFGSLFQRCVTVMMSGL) form the BTB domain.

This chain is BTB/POZ domain-containing protein 16 (BTBD16), found in Bos taurus (Bovine).